A 203-amino-acid polypeptide reads, in one-letter code: Protein-L-isoaspartate O-methyltransferase (203 aa).

Residue Ser50 is part of the active site.

It belongs to the methyltransferase superfamily. L-isoaspartyl/D-aspartyl protein methyltransferase family.

Its subcellular location is the cytoplasm. It catalyses the reaction [protein]-L-isoaspartate + S-adenosyl-L-methionine = [protein]-L-isoaspartate alpha-methyl ester + S-adenosyl-L-homocysteine. Functionally, catalyzes the methyl esterification of L-isoaspartyl residues in peptides and proteins that result from spontaneous decomposition of normal L-aspartyl and L-asparaginyl residues. It plays a role in the repair and/or degradation of damaged proteins. The sequence is that of Protein-L-isoaspartate O-methyltransferase from Methanococcoides burtonii (strain DSM 6242 / NBRC 107633 / OCM 468 / ACE-M).